Reading from the N-terminus, the 457-residue chain is NADP-specific glutamate dehydrogenase (457 aa).

K113 is a catalytic residue.

This sequence belongs to the Glu/Leu/Phe/Val dehydrogenases family. As to quaternary structure, homohexamer.

It catalyses the reaction L-glutamate + NADP(+) + H2O = 2-oxoglutarate + NH4(+) + NADPH + H(+). The sequence is that of NADP-specific glutamate dehydrogenase (GDH) from Tuber borchii (White truffle).